We begin with the raw amino-acid sequence, 462 residues long: Elongation factor 1-alpha (462 aa).

Position 2 is a n,N,N-trimethylglycine (G2). K3 is modified (N6,N6-dimethyllysine; alternate). An N6-methyllysine; alternate modification is found at K3. In terms of domain architecture, tr-type G spans 5–242; the sequence is KAHVNVVVIG…DAIEPPVRPS (238 aa). Residues 14–21 form a G1 region; sequence GHVDSGKS. 14-21 is a binding site for GTP; sequence GHVDSGKS. N6-methyllysine is present on K30. Residues 70–74 are G2; sequence GITID. K79 bears the N6,N6,N6-trimethyllysine mark. Residues 91–94 are G3; that stretch reads DAPG. GTP-binding positions include 91 to 95 and 153 to 156; these read DAPGH and NKMD. The segment at 153 to 156 is G4; sequence NKMD. Residues 192 to 194 are G5; the sequence is SGW. K318 carries the N6,N6-dimethyllysine; alternate modification. K318 is subject to N6-methyllysine; alternate. An N6-methyllysine modification is found at K392.

This sequence belongs to the TRAFAC class translation factor GTPase superfamily. Classic translation factor GTPase family. EF-Tu/EF-1A subfamily.

The protein localises to the cytoplasm. Its function is as follows. This protein promotes the GTP-dependent binding of aminoacyl-tRNA to the A-site of ribosomes during protein biosynthesis. This is Elongation factor 1-alpha (TEF1) from Serendipita indica (Root endophyte fungus).